Reading from the N-terminus, the 118-residue chain is Large ribosomal subunit protein uL18 (118 aa).

It belongs to the universal ribosomal protein uL18 family. In terms of assembly, part of the 50S ribosomal subunit; part of the 5S rRNA/L5/L18/L25 subcomplex. Contacts the 5S and 23S rRNAs.

This is one of the proteins that bind and probably mediate the attachment of the 5S RNA into the large ribosomal subunit, where it forms part of the central protuberance. This is Large ribosomal subunit protein uL18 from Brachyspira hyodysenteriae (strain ATCC 49526 / WA1).